A 565-amino-acid polypeptide reads, in one-letter code: Oxygen-dependent choline dehydrogenase (565 aa).

6-35 contributes to the FAD binding site; it reads DYIIIGAGSAGNVLATRLTEDADVSVLLLE. The active-site Proton acceptor is histidine 475. The segment at 541–565 is disordered; it reads RSNAPYFVAGERPVRGQPQRAVSAA.

This sequence belongs to the GMC oxidoreductase family. It depends on FAD as a cofactor.

The catalysed reaction is choline + A = betaine aldehyde + AH2. The enzyme catalyses betaine aldehyde + NAD(+) + H2O = glycine betaine + NADH + 2 H(+). It functions in the pathway amine and polyamine biosynthesis; betaine biosynthesis via choline pathway; betaine aldehyde from choline (cytochrome c reductase route): step 1/1. In terms of biological role, involved in the biosynthesis of the osmoprotectant glycine betaine. Catalyzes the oxidation of choline to betaine aldehyde and betaine aldehyde to glycine betaine at the same rate. This Ectopseudomonas mendocina (strain ymp) (Pseudomonas mendocina) protein is Oxygen-dependent choline dehydrogenase.